Consider the following 213-residue polypeptide: Serine acetyltransferase (213 aa).

The protein belongs to the transferase hexapeptide repeat family.

Its subcellular location is the cytoplasm. It carries out the reaction L-serine + acetyl-CoA = O-acetyl-L-serine + CoA. The protein operates within amino-acid biosynthesis; L-cysteine biosynthesis; L-cysteine from L-serine: step 1/2. The chain is Serine acetyltransferase (cysE) from Staphylococcus aureus (strain COL).